The chain runs to 929 residues: Lon protease homolog 2, peroxisomal (929 aa).

Residues Leu-11–Leu-257 enclose the Lon N-terminal domain. The tract at residues Gly-302–Asp-325 is disordered. ATP is bound at residue Gly-484–Thr-491. The region spanning His-727–Asp-914 is the Lon proteolytic domain. Residues Ser-820 and Lys-863 contribute to the active site. The short motif at Ser-927 to Leu-929 is the Microbody targeting signal element.

The protein belongs to the peptidase S16 family.

The protein localises to the peroxisome matrix. The enzyme catalyses Hydrolysis of proteins in presence of ATP.. In terms of biological role, ATP-dependent serine protease that mediates the selective degradation of misfolded and unassembled polypeptides in the peroxisomal matrix. Necessary for type 2 peroxisome targeting signal (PTS2)-containing protein processing and facilitates peroxisome matrix protein import. The chain is Lon protease homolog 2, peroxisomal from Aspergillus niger (strain ATCC MYA-4892 / CBS 513.88 / FGSC A1513).